The primary structure comprises 499 residues: Probable alpha-L-arabinofuranosidase B (499 aa).

Positions 1–17 (MFSRRNLLALGLAATVS) are cleaved as a signal peptide. The tract at residues 18-335 (AGPCDIYEAG…ENIVAAKYVV (318 aa)) is catalytic. Cystine bridges form between Cys-21-Cys-31, Cys-81-Cys-86, and Cys-176-Cys-177. Asn-83 is a glycosylation site (N-linked (GlcNAc...) asparagine). N-linked (GlcNAc...) asparagine glycosylation is present at Asn-202. A substrate-binding site is contributed by Asp-219. The Nucleophile role is filled by Glu-221. Substrate is bound by residues Asn-222, Asn-223, Gly-296, His-416, Asn-418, Phe-419, Asp-435, His-463, Glu-465, Leu-468, and Asp-488. Residues 336-499 (GSLVSGPSFT…SFEIETAFAS (164 aa)) are ABD. An intrachain disulfide couples Cys-401 to Cys-439.

It belongs to the glycosyl hydrolase 54 family.

The protein resides in the secreted. It catalyses the reaction Hydrolysis of terminal non-reducing alpha-L-arabinofuranoside residues in alpha-L-arabinosides.. It participates in glycan metabolism; L-arabinan degradation. Functionally, alpha-L-arabinofuranosidase involved in the degradation of arabinoxylan, a major component of plant hemicellulose. Able to hydrolyze 1,5-, 1,3- and 1,2-alpha-linkages not only in L-arabinofuranosyl oligosaccharides, but also in polysaccharides containing terminal non-reducing L-arabinofuranoses in side chains, like L-arabinan, arabinogalactan and arabinoxylan. The sequence is that of Probable alpha-L-arabinofuranosidase B (abfB) from Aspergillus awamori (Black koji mold).